Here is a 245-residue protein sequence, read N- to C-terminus: Probable transcriptional regulatory protein Aflv_0709 (245 aa).

Residues 1 to 14 (MAGHSKWKNIQRRK) show a composition bias toward basic residues. A disordered region spans residues 1–21 (MAGHSKWKNIQRRKNAQDAKR).

The protein belongs to the TACO1 family.

The protein localises to the cytoplasm. The chain is Probable transcriptional regulatory protein Aflv_0709 from Anoxybacillus flavithermus (strain DSM 21510 / WK1).